The sequence spans 180 residues: Ribulose bisphosphate carboxylase small subunit, chloroplastic 2 (180 aa).

A chloroplast-targeting transit peptide spans 1 to 56 (MASSVMSSAAVATSTNAAQASMVAPFTGLKSAASFPVSRKQNLDITSIASNGGRVQ).

Belongs to the RuBisCO small chain family. In terms of assembly, heterohexadecamer of 8 large and 8 small subunits.

It is found in the plastid. The protein localises to the chloroplast. In terms of biological role, ruBisCO catalyzes two reactions: the carboxylation of D-ribulose 1,5-bisphosphate, the primary event in carbon dioxide fixation, as well as the oxidative fragmentation of the pentose substrate. Both reactions occur simultaneously and in competition at the same active site. Although the small subunit is not catalytic it is essential for maximal activity. The polypeptide is Ribulose bisphosphate carboxylase small subunit, chloroplastic 2 (Petunia hybrida (Petunia)).